The sequence spans 414 residues: FAD-dependent monooxygenase adaC (414 aa).

FAD-binding residues include E32, A43, R115, D325, and G338.

Belongs to the paxM FAD-dependent monooxygenase family. Requires FAD as cofactor.

It carries out the reaction 3-(2,4-dioxopentyl)-3,6,8,9-tetrahydroxy-1-oxo-1,2,3,4-tetrahydroanthracene-2-carboxyl-[ACP] + NADPH + O2 + H(+) = 3-(2,4-dioxopentyl)-2,3,6,8,9-pentahydroxy-1-oxo-1,2,3,4-tetrahydroanthracene-2-carboxyl-[ACP] + NADP(+) + H2O. It functions in the pathway secondary metabolite biosynthesis. In terms of biological role, FAD-dependent monooxygenase; part of the gene cluster that mediates the biosynthesis of the linear tetracyclic TAN-1612 neuropeptide Y receptor antagonist. The decaketide backbone of TAN-1612 is synthesized by the non-reducing polyketide synthase adaA via condensation of one acetyl-CoA starter unit with 9 malonyl-CoA units. The FAD-dependent monooxygenase adaC then performs hydroxylation at C2 while the polaketide chain is still attached to the NRPKS adaA. The alpha-hydroxylation step at C2 appears to be crucial for the following C18-C1 Claisen cyclization and release of the C9-hydroxyl version of TAN-1612 from the NRPKS adaA, two steps performed by the lactamase-like protein adaB. Finally, the O-methyltransferase adaD performs the C9 O-methylation to complete the biosynthesis of TAN-1612. The sequence is that of FAD-dependent monooxygenase adaC from Aspergillus niger (strain ATCC MYA-4892 / CBS 513.88 / FGSC A1513).